The following is a 177-amino-acid chain: Bifunctional protein PyrR (177 aa).

The PRPP-binding motif lies at 101-113 (IILIDDVLYTGRT).

It belongs to the purine/pyrimidine phosphoribosyltransferase family. PyrR subfamily.

The catalysed reaction is UMP + diphosphate = 5-phospho-alpha-D-ribose 1-diphosphate + uracil. In terms of biological role, regulates the transcription of the pyrimidine nucleotide (pyr) operon in response to exogenous pyrimidines. Also displays a weak uracil phosphoribosyltransferase activity which is not physiologically significant. The sequence is that of Bifunctional protein PyrR from Endomicrobium trichonymphae.